The following is a 185-amino-acid chain: Hypoxanthine/guanine phosphoribosyltransferase (185 aa).

Belongs to the purine/pyrimidine phosphoribosyltransferase family. Archaeal HPRT subfamily. Homodimer.

The protein localises to the cytoplasm. The enzyme catalyses IMP + diphosphate = hypoxanthine + 5-phospho-alpha-D-ribose 1-diphosphate. It catalyses the reaction GMP + diphosphate = guanine + 5-phospho-alpha-D-ribose 1-diphosphate. It functions in the pathway purine metabolism; IMP biosynthesis via salvage pathway; IMP from hypoxanthine: step 1/1. Its function is as follows. Catalyzes a salvage reaction resulting in the formation of IMP that is energically less costly than de novo synthesis. The protein is Hypoxanthine/guanine phosphoribosyltransferase of Methanococcus vannielii (strain ATCC 35089 / DSM 1224 / JCM 13029 / OCM 148 / SB).